The following is a 144-amino-acid chain: Superoxide dismutase [Mn], mitochondrial (144 aa).

Mn(2+)-binding residues include His10, His58, and Asp143.

Belongs to the iron/manganese superoxide dismutase family. As to quaternary structure, homotetramer. Mn(2+) is required as a cofactor.

It is found in the mitochondrion matrix. It catalyses the reaction 2 superoxide + 2 H(+) = H2O2 + O2. Functionally, destroys superoxide anion radicals which are normally produced within the cells and which are toxic to biological systems. The sequence is that of Superoxide dismutase [Mn], mitochondrial from Petromyzon marinus (Sea lamprey).